We begin with the raw amino-acid sequence, 131 residues long: Cystatin J (131 aa).

The first 18 residues, 1–18, serve as a signal peptide directing secretion; sequence MHLYLCVLVCLSIGMANC. In terms of domain architecture, Cystatin spans 35-109; sequence DEILLTGVEF…RMNLPTKCSF (75 aa). The Secondary area of contact motif lies at 68 to 72; it reads QVVAG. Cystine bridges form between cysteine 86–cysteine 97 and cysteine 107–cysteine 128.

Belongs to the cystatin family.

It is found in the secreted. It localises to the nematocyst. In terms of biological role, this recombinant protein inhibits the C1 cysteine protease papain (Ki is below 0.5 nM). This is Cystatin J from Cyanea capillata (Lion's mane jellyfish).